Reading from the N-terminus, the 338-residue chain is uncharacterized protein (338 aa).

Residues 111–334 (HLGEERVLVP…LELAEKYNLD (224 aa)) enclose the Radical SAM core domain. Residues Cys129, Cys133, and Cys136 each contribute to the [4Fe-4S] cluster site.

It depends on [4Fe-4S] cluster as a cofactor.

This is an uncharacterized protein from Methanocaldococcus jannaschii (strain ATCC 43067 / DSM 2661 / JAL-1 / JCM 10045 / NBRC 100440) (Methanococcus jannaschii).